The sequence spans 239 residues: uncharacterized protein (239 aa).

The next 7 membrane-spanning stretches (helical) occupy residues 20-40, 48-68, 80-100, 106-126, 143-163, 164-184, and 192-212; these read ILIW…WLVL, FSSV…LGLL, WILL…GFHF, IYAM…TYLF, LILL…EILV, MIAG…DILH, and IPGA…VLYF.

The protein belongs to the cytomegalovirus US12 family.

It localises to the membrane. This is an uncharacterized protein from Homo sapiens (Human).